The primary structure comprises 111 residues: Transcription initiation factor IIA subunit 2 (111 aa).

Belongs to the TFIIA subunit 2 family. In terms of assembly, TFIIA is a heterodimer of the large unprocessed subunit 1 and a small subunit gamma. It was originally believed to be a heterotrimer of an alpha, a beta and a gamma subunit. Interacts with NCOA6 general coactivator. TFIIA forms a complex with TBP.

Its subcellular location is the nucleus. TFIIA is a component of the transcription machinery of RNA polymerase II and plays an important role in transcriptional activation. TFIIA in a complex with TBP mediates transcriptional activity. The chain is Transcription initiation factor IIA subunit 2 (gtf2a2) from Paralichthys olivaceus (Bastard halibut).